The chain runs to 71 residues: Translation initiation factor IF-1 (71 aa).

The 71-residue stretch at 1 to 71 (MSKDDLIQFT…LTKGRVIHRH (71 aa)) folds into the S1-like domain.

This sequence belongs to the IF-1 family. Component of the 30S ribosomal translation pre-initiation complex which assembles on the 30S ribosome in the order IF-2 and IF-3, IF-1 and N-formylmethionyl-tRNA(fMet); mRNA recruitment can occur at any time during PIC assembly.

Its subcellular location is the cytoplasm. Its function is as follows. One of the essential components for the initiation of protein synthesis. Stabilizes the binding of IF-2 and IF-3 on the 30S subunit to which N-formylmethionyl-tRNA(fMet) subsequently binds. Helps modulate mRNA selection, yielding the 30S pre-initiation complex (PIC). Upon addition of the 50S ribosomal subunit IF-1, IF-2 and IF-3 are released leaving the mature 70S translation initiation complex. The polypeptide is Translation initiation factor IF-1 (Rickettsia akari (strain Hartford)).